A 299-amino-acid polypeptide reads, in one-letter code: Probable GTP 3',8-cyclase (299 aa).

Residues leucine 4–aspartate 229 form the Radical SAM core domain. Arginine 13 contacts GTP. Positions 20 and 24 each coordinate [4Fe-4S] cluster. Position 26 (tyrosine 26) interacts with S-adenosyl-L-methionine. Position 27 (cysteine 27) interacts with [4Fe-4S] cluster. Lysine 61 contacts GTP. Residue glycine 65 coordinates S-adenosyl-L-methionine. Threonine 94 contacts GTP. Serine 118 lines the S-adenosyl-L-methionine pocket. Residue lysine 154 coordinates GTP. Residues cysteine 245 and cysteine 248 each coordinate [4Fe-4S] cluster. Residue arginine 250–arginine 252 participates in GTP binding. Cysteine 262 lines the [4Fe-4S] cluster pocket.

It belongs to the radical SAM superfamily. MoaA family. It depends on [4Fe-4S] cluster as a cofactor.

It carries out the reaction GTP + AH2 + S-adenosyl-L-methionine = (8S)-3',8-cyclo-7,8-dihydroguanosine 5'-triphosphate + 5'-deoxyadenosine + L-methionine + A + H(+). It functions in the pathway cofactor biosynthesis; molybdopterin biosynthesis. Catalyzes the cyclization of GTP to (8S)-3',8-cyclo-7,8-dihydroguanosine 5'-triphosphate. This is Probable GTP 3',8-cyclase from Methanococcus aeolicus (strain ATCC BAA-1280 / DSM 17508 / OCM 812 / Nankai-3).